Consider the following 212-residue polypeptide: MRRLTAFGLALLLLASGVARGEPAVTLDPQQSQVFRAWFVRIAQEQLRQGPSPRWHQQDCAGLVRFAANEALKVHDGKWLRANGLSNRYLPPELALSPEQRRLAQNWQQGGGQVGPYVNAIKLVQFNSRLVGRDLNQARPGDLMFYDQGDDQHLMIWMGRSIAYHTGSSTPTDNGMRSVSLQQLMTWKDTRWIPDESNPNFIGIYRLAFLSQ.

The N-terminal stretch at 1–21 (MRRLTAFGLALLLLASGVARG) is a signal peptide.

This sequence to E.coli YfaT and T.maritima TM0986.

This is an uncharacterized protein from Pseudomonas aeruginosa (strain ATCC 15692 / DSM 22644 / CIP 104116 / JCM 14847 / LMG 12228 / 1C / PRS 101 / PAO1).